Consider the following 395-residue polypeptide: GPI-anchor transamidase (395 aa).

An N-terminal signal peptide occupies residues 1 to 27 (MVDTCFLSRGLTTLAGLLLLPFGSLAA). Over 28-368 (SQIEDQAEQF…PKLKDWHPPG (341 aa)) the chain is Lumenal. Ca(2+)-binding residues include aspartate 79, isoleucine 82, glutamate 118, and aspartate 120. Histidine 164 functions as the Proton donor in the catalytic mechanism. The Nucleophile; acyl-thioester intermediate role is filled by cysteine 206. Residues cysteine 206, serine 232, and serine 234 each coordinate a protein. The autoinhibitory loop stretch occupies residues 231–236 (DSLSHQ). An intrachain disulfide couples cysteine 275 to cysteine 280. The chain crosses the membrane as a helical span at residues 369–385 (GFILGLWALIIMVFFKT). The Cytoplasmic portion of the chain corresponds to 386–395 (YGIKHMKFIF).

The protein belongs to the peptidase C13 family. Heteropentamer. Part of the GPI-anchor transamidase complex, consisting of PIGK, PIGT, PIGS, PIGU and GAA1. Interacts with GPAA1. Interacts with PIGT; this interaction, via a disulfide link, stabilizes the expression of GAA1 and PIGK and links them to PIGS. In terms of processing, the disulfide bond between PIGK/GPI8 and PIGT is important for normal enzyme activity.

The protein localises to the endoplasmic reticulum membrane. It functions in the pathway glycolipid biosynthesis; glycosylphosphatidylinositol-anchor biosynthesis. In the absence of proproteins substrates, exists in an inactive state with a disrupted catalytic site by an autoinhibitory loop. The binding of proprotein substrates, particularly the CSP region, to GPI-T triggers concerted conformational changes that alleviate the inhibition by the autoinhibitory loop. Meanwhile, proprotein residues near the omega- site induce the formation of a catalytic cleft for catalysis, following which the products are released and GPI-T reverts to the inactive state. Functionally, catalytic subunit of the glycosylphosphatidylinositol-anchor (GPI-anchor) transamidase (GPI-T) complex that catalyzes the formation of the linkage between a proprotein and a GPI-anchor and participates in GPI anchored protein biosynthesis. Recognizes diverse proproteins at a C-terminal signal peptide (CSP) region that lacks consensus sequence and replaces it with a GPI-anchor via a transamidation reaction. Transamidation catalysis reaction follows a two-phase mechanism. In the acyl-enzyme phase, the carbonyl group of the proproteins's omega-site undergoes a nucleophilic attack forming an enzyme-substrate thioester bond. Followed by a general acid catalysis that allows CSP releasing, regenerating the carbonyl, and forming the acyl-enzyme intermediate. In the GPI-anchor attachment phase, the amino group of the GPI-anchor's ethanolamine phosphate, the one on third mannose (EtNP3), mediates a nucleophilic attack on the carbonyl of the acyl-enzyme intermediate, replacing the CSP, allowing GPI-anchor attachment to the omega-residue, therefore forming the product and freeing the enzyme. The chain is GPI-anchor transamidase from Bos taurus (Bovine).